A 275-amino-acid chain; its full sequence is Tryptophan synthase alpha chain (275 aa).

Residues glutamate 60 and aspartate 71 each act as proton acceptor in the active site.

It belongs to the TrpA family. In terms of assembly, tetramer of two alpha and two beta chains.

It catalyses the reaction (1S,2R)-1-C-(indol-3-yl)glycerol 3-phosphate + L-serine = D-glyceraldehyde 3-phosphate + L-tryptophan + H2O. It functions in the pathway amino-acid biosynthesis; L-tryptophan biosynthesis; L-tryptophan from chorismate: step 5/5. Its function is as follows. The alpha subunit is responsible for the aldol cleavage of indoleglycerol phosphate to indole and glyceraldehyde 3-phosphate. The sequence is that of Tryptophan synthase alpha chain from Prochlorococcus marinus (strain MIT 9313).